The primary structure comprises 516 residues: Delta(24)-sterol reductase (516 aa).

Positions 1–22 are cleaved as a signal peptide; sequence MEPAVSLAVCALLFLLWVRLKG. Residues 23 to 31 are Lumenal-facing; sequence LEFVLIHQR. The helical transmembrane segment at 32–52 threads the bilayer; sequence WVFVCLFLLPLSLIFDIYYYV. The Cytoplasmic portion of the chain corresponds to 53–516; that stretch reads RAWVVFKLSS…YDKICKAARH (464 aa). The 177-residue stretch at 58 to 234 folds into the FAD-binding PCMH-type domain; it reads FKLSSAPRLH…VAAEIRIIPA (177 aa). 163-175 is an FAD binding site; that stretch reads TVGGLIMGTGIES.

The protein belongs to the FAD-binding oxidoreductase/transferase type 4 family. Interacts with DHCR7; this interaction regulates DHCR7 activity. The cofactor is FAD. In terms of tissue distribution, highly expressed in brain and adrenal gland with moderate expression in liver, lung, spleen, prostate and spinal cord. Low expression in heart, uterus and prostate. Undetectable in blood cells. In the brain, strongly expressed in cortical regions, substantia nigra, caudate nucleus, hippocampus, medulla oblongata and pons. In brains affected by Alzheimer disease, expression in the inferior temporal lobe is substantially lower than in the frontal cortex.

The protein resides in the endoplasmic reticulum membrane. It localises to the golgi apparatus membrane. It catalyses the reaction cholesterol + NADP(+) = desmosterol + NADPH + H(+). It carries out the reaction lanosterol + NADPH + H(+) = 24,25-dihydrolanosterol + NADP(+). The enzyme catalyses 5alpha-cholest-8-en-3beta-ol + NADP(+) = zymosterol + NADPH + H(+). It participates in steroid biosynthesis; cholesterol biosynthesis. In terms of biological role, catalyzes the reduction of the delta-24 double bond of sterol intermediates during cholesterol biosynthesis. In addition to its cholesterol-synthesizing activity, can protect cells from oxidative stress by reducing caspase 3 activity during apoptosis induced by oxidative stress. Also protects against amyloid-beta peptide-induced apoptosis. This chain is Delta(24)-sterol reductase (DHCR24), found in Homo sapiens (Human).